A 193-amino-acid chain; its full sequence is dCTP deaminase, dUMP-forming (193 aa).

DCTP is bound by residues 107–112 (RSSLGR), Asp125, 133–135 (TLE), Gln154, and Tyr168. The active-site Proton donor/acceptor is Glu135. Residues 169–193 (AESSGKYHGDERPSPSKMHLDFCRG) form a disordered region. Over residues 173 to 193 (GKYHGDERPSPSKMHLDFCRG) the composition is skewed to basic and acidic residues.

It belongs to the dCTP deaminase family. In terms of assembly, homotrimer.

The catalysed reaction is dCTP + 2 H2O = dUMP + NH4(+) + diphosphate. The protein operates within pyrimidine metabolism; dUMP biosynthesis; dUMP from dCTP: step 1/1. Functionally, bifunctional enzyme that catalyzes both the deamination of dCTP to dUTP and the hydrolysis of dUTP to dUMP without releasing the toxic dUTP intermediate. The protein is dCTP deaminase, dUMP-forming of Methanopyrus kandleri (strain AV19 / DSM 6324 / JCM 9639 / NBRC 100938).